A 369-amino-acid chain; its full sequence is Protein FAM187B (369 aa).

An N-terminal signal peptide occupies residues 1 to 17; it reads MPPMLWLLLHFAAPALG. The Extracellular portion of the chain corresponds to 18–335; sequence FYFSISCPSG…RADSVLKGLK (318 aa). N-linked (GlcNAc...) asparagine glycosylation is found at asparagine 45, asparagine 68, and asparagine 130. Residues 336–356 form a helical membrane-spanning segment; the sequence is LVLLVVTVLALLGALLKCIHP. The Cytoplasmic segment spans residues 357–369; that stretch reads SPGRRSTQVLVVK.

The protein belongs to the FAM187 family.

It localises to the membrane. The protein is Protein FAM187B (FAM187B) of Homo sapiens (Human).